A 313-amino-acid chain; its full sequence is uncharacterized protein (313 aa).

The tract at residues methionine 1 to arginine 313 is disordered. Basic and acidic residues-rich tracts occupy residues leucine 24–glutamate 33, threonine 40–tyrosine 85, threonine 95–glycine 116, and threonine 156–glycine 181. Basic residues predominate over residues arginine 194–serine 205. Composition is skewed to low complexity over residues asparagine 206 to serine 266 and serine 272 to arginine 313.

Its subcellular location is the virion. This is an uncharacterized protein from Acanthamoeba polyphaga mimivirus (APMV).